The following is a 492-amino-acid chain: Catalase isozyme 3 (492 aa).

Catalysis depends on residues His-65 and Asn-138. Tyr-347 contacts heme.

It belongs to the catalase family. Homotetramer. Heme serves as cofactor. In terms of tissue distribution, abundant in green cotyledons, etiolated cotyledons, green hypocotyl and root, but not in young leaf.

The protein resides in the peroxisome. The enzyme catalyses 2 H2O2 = O2 + 2 H2O. In terms of biological role, occurs in almost all aerobically respiring organisms and serves to protect cells from the toxic effects of hydrogen peroxide. The chain is Catalase isozyme 3 (CAT3) from Cucurbita pepo (Vegetable marrow).